The primary structure comprises 776 residues: Rho guanine nucleotide exchange factor 6 (776 aa).

The Calponin-homology (CH) domain occupies 1–111 (MNPEEQIVTW…TLLAVNKATE (111 aa)). Positions 115–151 (SERPCGRSSSLSAANTSQTNPQGAVSSTVSGLQRQSK) are disordered. The segment covering 121-151 (RSSSLSAANTSQTNPQGAVSSTVSGLQRQSK) has biased composition (polar residues). Position 126 is a phosphoserine (Ser126). Thr133 bears the Phosphothreonine mark. Phosphoserine occurs at positions 144 and 150. An SH3 domain is found at 160 to 219 (SHQLIVKARFNFKQTNEDELSVCKGDIIYVTRVEEGGWWEGTLNGRTGWFPSNYVREIKS). The residue at position 225 (Ser225) is a Phosphoserine. Residues 241–421 (YYTVVLQNIL…KTLMGQCQDL (181 aa)) form the DH domain. The PH domain occupies 443–548 (DIKNLGNVIF…WLEQLNRLIR (106 aa)). Ser488 is modified (phosphoserine). The segment covering 561–572 (SSSCSAHSSFSS) has biased composition (low complexity). The segment at 561–581 (SSSCSAHSSFSSTGQPRGPLE) is disordered. Ser640 and Ser684 each carry phosphoserine.

In terms of assembly, interacts with PAK kinases through the SH3 domain. Interacts with GIT1. Component of cytoplasmic complexes, which also contain PXN, GIT1 and PAK1. Interacts with PARVB. Interacts with BIN2. Identified in a complex with BIN2 and GIT2. Interacts with PARVG; the guanine nucleotide exchange factor activity of ARHGEF6 is essential for PARVG-induced enhancement of cell spreading. In terms of tissue distribution, ubiquitous.

The protein localises to the cell projection. It is found in the lamellipodium. Functionally, acts as a RAC1 guanine nucleotide exchange factor (GEF). The sequence is that of Rho guanine nucleotide exchange factor 6 (ARHGEF6) from Homo sapiens (Human).